The chain runs to 267 residues: Large ribosomal subunit protein uL4 (267 aa).

This sequence belongs to the universal ribosomal protein uL4 family. As to quaternary structure, part of the 50S ribosomal subunit.

In terms of biological role, one of the primary rRNA binding proteins, this protein initially binds near the 5'-end of the 23S rRNA. It is important during the early stages of 50S assembly. It makes multiple contacts with different domains of the 23S rRNA in the assembled 50S subunit and ribosome. Its function is as follows. Forms part of the polypeptide exit tunnel. This chain is Large ribosomal subunit protein uL4, found in Saccharolobus islandicus (strain Y.N.15.51 / Yellowstone #2) (Sulfolobus islandicus).